Consider the following 529-residue polypeptide: T-complex protein 1 subunit delta (529 aa).

The protein belongs to the TCP-1 chaperonin family. As to quaternary structure, heterooligomeric complex of about 850 to 900 kDa that forms two stacked rings, 12 to 16 nm in diameter.

It localises to the cytoplasm. Its function is as follows. Molecular chaperone; assists the folding of proteins upon ATP hydrolysis. Known to play a role, in vitro, in the folding of actin and tubulin. The polypeptide is T-complex protein 1 subunit delta (CCT4) (Eremothecium gossypii (strain ATCC 10895 / CBS 109.51 / FGSC 9923 / NRRL Y-1056) (Yeast)).